A 120-amino-acid chain; its full sequence is GATA transcription factor 23 (120 aa).

The segment at 22–76 (KGTIRCCSECKTTKTPMWRGGPTGPKSLCNACGIRHRKQRRSELLGIHIIRSHKS) adopts a GATA-type zinc-finger fold.

This sequence belongs to the type IV zinc-finger family. Class B subfamily.

It is found in the nucleus. Transcriptional regulator that specifically binds 5'-GATA-3' or 5'-GAT-3' motifs within gene promoters. This is GATA transcription factor 23 (GATA23) from Arabidopsis thaliana (Mouse-ear cress).